Reading from the N-terminus, the 295-residue chain is MSGALDVLQMKEEDVLKFLAAGTHLGGTNLDFQMEQYIYKRKSDGIYIINLKRTWEKLLLAARAIVAIENPADVSVISSRNTGQRAVLKFAAATGATPIAGRFTPGTFTNQIQAAFREPRLLVVTDPRADHQPLTEASYVNLPTIALCNTDSPLRYVDIAIPCNNKGAHSVGLMWWMLAREVLRMRGTISREHPWEVMPDLYFYRDPEEIEKEEQAAAEKAVTKEEFQGEWTAPAPEFTATQPEVADWSEGVQVPSVPIQQFPTEDWSAQPATEDWSAAPTAQATEWVGATTEWS.

At S2 the chain carries N-acetylserine. Residue S43 is modified to Phosphoserine. K52 is modified (N6-acetyllysine). Residues 54–113 are interaction with PPP1R16B; sequence TWEKLLLAARAIVAIENPADVSVISSRNTGQRAVLKFAAATGATPIAGRFTPGTFTNQIQ. K89 bears the N6-acetyllysine; alternate mark. A Glycyl lysine isopeptide (Lys-Gly) (interchain with G-Cter in SUMO2); alternate cross-link involves residue K89. T97 carries the post-translational modification Phosphothreonine. Laminin-binding regions lie at residues 161 to 180 and 205 to 229; these read IPCNNKGAHSVGLMWWMLAR and RDPEEIEKEEQAAAEKAVTKEEFQG. [DE]-W-[ST] repeat units follow at residues 230 to 232, 247 to 249, 266 to 268, 275 to 277, and 293 to 295; these read EWT, DWS, and EWS. Residues 242–295 form a laminin-binding region; it reads QPEVADWSEGVQVPSVPIQQFPTEDWSAQPATEDWSAAPTAQATEWVGATTEWS. Positions 266-295 are disordered; that stretch reads DWSAQPATEDWSAAPTAQATEWVGATTEWS.

The protein belongs to the universal ribosomal protein uS2 family. Monomer (37LRP) and homodimer (67LR). Component of the small ribosomal subunit. Mature ribosomes consist of a small (40S) and a large (60S) subunit. The 40S subunit contains about 33 different proteins and 1 molecule of RNA (18S). The 60S subunit contains about 49 different proteins and 3 molecules of RNA (28S, 5.8S and 5S). Interacts with RPS21. Interacts with several laminins including at least LAMB1. Interacts with MDK. The mature dimeric form interacts with PPP1R16B (via its fourth ankyrin repeat). Interacts with PPP1CA only in the presence of PPP1R16B. Post-translationally, acylated. Acylation may be a prerequisite for conversion of the monomeric 37 kDa laminin receptor precursor (37LRP) to the mature dimeric 67 kDa laminin receptor (67LR), and may provide a mechanism for membrane association. In terms of processing, cleaved by stromelysin-3 (ST3) at the cell surface. Cleavage by stromelysin-3 may be a mechanism to alter cell-extracellular matrix interactions.

Its subcellular location is the cell membrane. The protein resides in the cytoplasm. It localises to the nucleus. Functionally, required for the assembly and/or stability of the 40S ribosomal subunit. Required for the processing of the 20S rRNA-precursor to mature 18S rRNA in a late step of the maturation of 40S ribosomal subunits. Also functions as a cell surface receptor for laminin. Plays a role in cell adhesion to the basement membrane and in the consequent activation of signaling transduction pathways. May play a role in cell fate determination and tissue morphogenesis. Also acts as a receptor for several other ligands, including the pathogenic prion protein, viruses, and bacteria. Acts as a PPP1R16B-dependent substrate of PPP1CA. The chain is Small ribosomal subunit protein uS2 from Chlorocebus aethiops (Green monkey).